The following is a 247-amino-acid chain: Adenosylcobinamide-GDP ribazoletransferase (247 aa).

Transmembrane regions (helical) follow at residues 34 to 54 (IITF…VFMV), 59 to 79 (CGVP…TGGF), 113 to 133 (GGLA…ELAL), and 194 to 214 (VLLP…AIFI).

Belongs to the CobS family. It depends on Mg(2+) as a cofactor.

It localises to the cell inner membrane. The enzyme catalyses alpha-ribazole + adenosylcob(III)inamide-GDP = adenosylcob(III)alamin + GMP + H(+). The catalysed reaction is alpha-ribazole 5'-phosphate + adenosylcob(III)inamide-GDP = adenosylcob(III)alamin 5'-phosphate + GMP + H(+). Its pathway is cofactor biosynthesis; adenosylcobalamin biosynthesis; adenosylcobalamin from cob(II)yrinate a,c-diamide: step 7/7. Joins adenosylcobinamide-GDP and alpha-ribazole to generate adenosylcobalamin (Ado-cobalamin). Also synthesizes adenosylcobalamin 5'-phosphate from adenosylcobinamide-GDP and alpha-ribazole 5'-phosphate. The polypeptide is Adenosylcobinamide-GDP ribazoletransferase (Escherichia coli (strain ATCC 8739 / DSM 1576 / NBRC 3972 / NCIMB 8545 / WDCM 00012 / Crooks)).